A 926-amino-acid chain; its full sequence is Probable Xaa-Pro aminopeptidase PTT_10145 (926 aa).

Mn(2+) is bound by residues aspartate 274, aspartate 285, glutamate 435, and glutamate 476. Disordered stretches follow at residues glycine 505–serine 538, lysine 595–valine 615, serine 668–histidine 696, isoleucine 711–threonine 741, and methionine 865–arginine 926. A compositionally biased stretch (polar residues) spans asparagine 506–proline 515. 2 stretches are compositionally biased toward basic and acidic residues: residues serine 685–histidine 696 and glycine 719–aspartate 730. The span at asparagine 887–aspartate 897 shows a compositional bias: polar residues. Residues proline 900–arginine 915 are compositionally biased toward basic and acidic residues.

It belongs to the peptidase M24B family. It depends on Mn(2+) as a cofactor.

It carries out the reaction Release of any N-terminal amino acid, including proline, that is linked to proline, even from a dipeptide or tripeptide.. Functionally, catalyzes the removal of a penultimate prolyl residue from the N-termini of peptides. The polypeptide is Probable Xaa-Pro aminopeptidase PTT_10145 (Pyrenophora teres f. teres (strain 0-1) (Barley net blotch fungus)).